The following is a 96-amino-acid chain: Putative septation protein SpoVG (96 aa).

It belongs to the SpoVG family.

In terms of biological role, could be involved in septation. The protein is Putative septation protein SpoVG of Borrelia hermsii (strain HS1 / DAH).